The following is a 64-amino-acid chain: Prokaryotic ubiquitin-like protein Pup (64 aa).

Residues 1–37 are disordered; the sequence is MAQEQTKRGGGGGDDDDIAGSTAAGQERREKLTEETD. An ARC ATPase binding region spans residues 21-58; it reads STAAGQERREKLTEETDDLLDEIDDVLEENAEDFVRAY. A coiled-coil region spans residues 23–52; the sequence is AAGQERREKLTEETDDLLDEIDDVLEENAE. A Deamidated glutamine modification is found at Gln64. Gln64 is covalently cross-linked (Isoglutamyl lysine isopeptide (Gln-Lys) (interchain with K-? in acceptor proteins)).

This sequence belongs to the prokaryotic ubiquitin-like protein family. Strongly interacts with the proteasome-associated ATPase ARC through a hydrophobic interface; the interacting region of Pup lies in its C-terminal half. There is one Pup binding site per ARC hexamer ring. Post-translationally, is modified by deamidation of its C-terminal glutamine to glutamate by the deamidase Dop, a prerequisite to the subsequent pupylation process.

It functions in the pathway protein degradation; proteasomal Pup-dependent pathway. Functionally, protein modifier that is covalently attached to lysine residues of substrate proteins, thereby targeting them for proteasomal degradation. The tagging system is termed pupylation. This chain is Prokaryotic ubiquitin-like protein Pup, found in Mycobacterium tuberculosis (strain ATCC 25177 / H37Ra).